We begin with the raw amino-acid sequence, 396 residues long: Elongation factor Tu 2 (396 aa).

One can recognise a tr-type G domain in the interval lysine 10–glutamate 206. Residues glycine 19–threonine 26 are G1. Glycine 19–threonine 26 contributes to the GTP binding site. Threonine 26 is a Mg(2+) binding site. The tract at residues glycine 60 to asparagine 64 is G2. Positions aspartate 81–glycine 84 are G3. Residues aspartate 81–histidine 85 and asparagine 136–aspartate 139 each bind GTP. The tract at residues asparagine 136–aspartate 139 is G4. A G5 region spans residues serine 174–lysine 176.

This sequence belongs to the TRAFAC class translation factor GTPase superfamily. Classic translation factor GTPase family. EF-Tu/EF-1A subfamily. In terms of assembly, monomer.

Its subcellular location is the cytoplasm. It carries out the reaction GTP + H2O = GDP + phosphate + H(+). Its function is as follows. GTP hydrolase that promotes the GTP-dependent binding of aminoacyl-tRNA to the A-site of ribosomes during protein biosynthesis. This Acidovorax sp. (strain JS42) protein is Elongation factor Tu 2.